Reading from the N-terminus, the 357-residue chain is UPF0283 membrane protein BCAN_A1047 (357 aa).

Residues 1–36 form a disordered region; sequence MSDKTPRKPTAFRLEQPARVSAASEQEEPRRPRAVK. Positions 27-36 are enriched in basic and acidic residues; the sequence is EEPRRPRAVK. The next 2 membrane-spanning stretches (helical) occupy residues 78–98 and 109–129; these read ILFGALGILVSFAIGIWTEDL and LGWTALGVAMVALAAFAAIIL.

This sequence belongs to the UPF0283 family.

Its subcellular location is the cell inner membrane. This Brucella canis (strain ATCC 23365 / NCTC 10854 / RM-666) protein is UPF0283 membrane protein BCAN_A1047.